The following is a 169-amino-acid chain: Peptide methionine sulfoxide reductase MsrA (169 aa).

Cysteine 10 is an active-site residue.

The protein belongs to the MsrA Met sulfoxide reductase family.

It catalyses the reaction L-methionyl-[protein] + [thioredoxin]-disulfide + H2O = L-methionyl-(S)-S-oxide-[protein] + [thioredoxin]-dithiol. The enzyme catalyses [thioredoxin]-disulfide + L-methionine + H2O = L-methionine (S)-S-oxide + [thioredoxin]-dithiol. Functionally, has an important function as a repair enzyme for proteins that have been inactivated by oxidation. Catalyzes the reversible oxidation-reduction of methionine sulfoxide in proteins to methionine. This chain is Peptide methionine sulfoxide reductase MsrA, found in Streptococcus pyogenes serotype M1.